We begin with the raw amino-acid sequence, 76 residues long: Omega-conotoxin-like TxMKLT1-0211 (76 aa).

An N-terminal signal peptide occupies residues 1–22; that stretch reads MKLTCMMIVAVLFLTAWTFVTA. A propeptide spanning residues 23 to 52 is cleaved from the precursor; that stretch reads VPHSSNALENLYLKAHHEMNNPEDSELNKR. 3 disulfide bridges follow: Cys53–Cys67, Cys60–Cys71, and Cys66–Cys75.

It belongs to the conotoxin O1 superfamily. As to expression, expressed by the venom duct.

It localises to the secreted. Omega-conotoxins act at presynaptic membranes, they bind and block voltage-gated calcium channels (Cav). This is Omega-conotoxin-like TxMKLT1-0211 from Conus textile (Cloth-of-gold cone).